The sequence spans 231 residues: F-box protein SKIP8 (231 aa).

A disordered region spans residues 1-24 (MPSTPLANGGTPPMGGGERTTVTT). The 47-residue stretch at 34–80 (VSMMEQLVPEITTHALSYLDYPSLCRLSMTNSLMRKAANDDNAWKAL) folds into the F-box domain.

Part of a SCF (ASK-cullin-F-box) protein ligase complex. Interacts with SKP1A/ASK1.

It functions in the pathway protein modification; protein ubiquitination. Its function is as follows. Component of SCF(ASK-cullin-F-box) E3 ubiquitin ligase complexes, which may mediate the ubiquitination and subsequent proteasomal degradation of target proteins. The polypeptide is F-box protein SKIP8 (SKIP8) (Arabidopsis thaliana (Mouse-ear cress)).